The primary structure comprises 567 residues: Potassium-transporting ATPase potassium-binding subunit (567 aa).

11 helical membrane passes run 5 to 25, 64 to 84, 136 to 156, 179 to 199, 254 to 274, 285 to 305, 332 to 352, 359 to 376, 421 to 441, 486 to 506, and 529 to 549; these read GWIQ…PLGG, TTYA…LYML, GLTV…IALI, LYVL…LGVP, ISNM…TNVF, WAIF…CYWA, IAMS…AVIA, ALGG…EIII, MLAV…ASVI, ITIG…AMAI, and LFVG…FFPA.

This sequence belongs to the KdpA family. The system is composed of three essential subunits: KdpA, KdpB and KdpC.

It is found in the cell inner membrane. Its function is as follows. Part of the high-affinity ATP-driven potassium transport (or Kdp) system, which catalyzes the hydrolysis of ATP coupled with the electrogenic transport of potassium into the cytoplasm. This subunit binds the periplasmic potassium ions and delivers the ions to the membrane domain of KdpB through an intramembrane tunnel. This is Potassium-transporting ATPase potassium-binding subunit from Brucella anthropi (strain ATCC 49188 / DSM 6882 / CCUG 24695 / JCM 21032 / LMG 3331 / NBRC 15819 / NCTC 12168 / Alc 37) (Ochrobactrum anthropi).